A 384-amino-acid chain; its full sequence is Galactokinase (384 aa).

34–37 lines the substrate pocket; the sequence is EHTD. 123 to 129 is a binding site for ATP; that stretch reads SSGLSSS. S129 and E161 together coordinate Mg(2+). The active-site Proton acceptor is the D173. Y222 provides a ligand contact to substrate.

Belongs to the GHMP kinase family. GalK subfamily.

It is found in the cytoplasm. The catalysed reaction is alpha-D-galactose + ATP = alpha-D-galactose 1-phosphate + ADP + H(+). It functions in the pathway carbohydrate metabolism; galactose metabolism. Functionally, catalyzes the transfer of the gamma-phosphate of ATP to D-galactose to form alpha-D-galactose-1-phosphate (Gal-1-P). The chain is Galactokinase from Haemophilus influenzae (strain ATCC 51907 / DSM 11121 / KW20 / Rd).